The primary structure comprises 152 residues: Large ribosomal subunit protein bL9 (152 aa).

This sequence belongs to the bacterial ribosomal protein bL9 family.

Binds to the 23S rRNA. The sequence is that of Large ribosomal subunit protein bL9 from Mycobacterium bovis (strain ATCC BAA-935 / AF2122/97).